A 270-amino-acid chain; its full sequence is MSERKVLNKYIPPDYDPSIRPPKKKKKFQGPNGGKLTVRLMTPFSMRCHTCGEYIYKGKKFNARKEKTGEKYFSIDILRFYIRCTRCAAEITFITDPKHADYAAESGASRNYEPWHEKRLQEYEENELAERNDIPEEDEMEKLEQKTLDTKRQMQISDALDELREKSARRSRVNIDDAIALLKEDAYGSIEEEESKKRKFEEEEIDREAKSLFSSQDGEIIRRLNAETTVEKELPKPIDLVSEKLATSNIPNFQPPKYAKRKMEKKKVLV.

Residues 1-32 are disordered; that stretch reads MSERKVLNKYIPPDYDPSIRPPKKKKKFQGPN. Residues cysteine 48, cysteine 51, cysteine 84, and cysteine 87 each contribute to the Zn(2+) site. A disordered region spans residues 251–270; sequence PNFQPPKYAKRKMEKKKVLV. Basic residues predominate over residues 258-270; sequence YAKRKMEKKKVLV.

Belongs to the CWC16 family. YJU2 subfamily. In terms of assembly, component of the spliceosome. Present in the activated B complex, the catalytically activated B* complex which catalyzes the branching, the catalytic step 1 C complex catalyzing the exon ligation, and the postcatalytic P complex containing the ligated exons (mRNA) and the excised lariat intron. Belongs to the 40S cdc5-associated complex (or cwf complex), a spliceosome sub-complex reminiscent of a late-stage spliceosome composed of the U2, U5 and U6 snRNAs and at least brr2, cdc5, cwf2/prp3, cwf3/syf1, cwf4/syf3, cwf5/ecm2, spp42/cwf6, cwf7/spf27, cwf8, cwf9, cwf10, cwf11, cwf12, prp45/cwf13, cwf14, cwf15, cwf16, cwf17, cwf18, cwf19, cwf20, cwf21, cwf22, cwf23, cwf24, cwf25, cwf26, cyp7/cwf27, cwf28, cwf29/ist3, lea1, msl1, prp5/cwf1, prp10, prp12/sap130, prp17, prp22, sap61, sap62, sap114, sap145, slu7, smb1, smd1, smd3, smf1, smg1 and syf2.

Its subcellular location is the nucleus. Functionally, part of the spliceosome which catalyzes two sequential transesterification reactions, first the excision of the non-coding intron from pre-mRNA and then the ligation of the coding exons to form the mature mRNA. Plays a role in stabilizing the structure of the spliceosome catalytic core and docking of the branch helix into the active site, producing 5'-exon and lariat intron-3'-intermediates. This is Splicing factor YJU2 (cwf16) from Schizosaccharomyces pombe (strain 972 / ATCC 24843) (Fission yeast).